The chain runs to 375 residues: ATP-dependent kinase YFH7 (375 aa).

66 to 74 lines the ATP pocket; it reads GPPGSGKST.

The protein belongs to the YFH7 family.

ATP-dependent kinase that could be involved in endoplasmic reticulum membrane assembly. This is ATP-dependent kinase YFH7 (YFH7) from Zygosaccharomyces rouxii (strain ATCC 2623 / CBS 732 / NBRC 1130 / NCYC 568 / NRRL Y-229).